The chain runs to 784 residues: ATP-dependent 6-phosphofructokinase, platelet type (784 aa).

Position 1 is an N-acetylmethionine (M1). The interval 1–399 (MDADDSRAPK…NLNTYKRLAI (399 aa)) is N-terminal catalytic PFK domain 1. A phosphoserine mark is found at S6, S12, and S21. ATP is bound by residues G34, 97–98 (RC), and 127–130 (GDGS). Mg(2+) is bound at residue D128. Phosphoserine is present on S142. Residues 173–175 (SID), R210, 217–219 (MGR), E273, R301, and 307–310 (HVQR) contribute to the substrate site. The active-site Proton acceptor is the D175. At S386 the chain carries Phosphoserine. K395 carries the post-translational modification N6-acetyllysine. Residues 400–411 (KLPDDQIPKTNC) are interdomain linker. Residues 412-784 (NVAVINVGAP…QLEHVQPWSV (373 aa)) form a C-terminal regulatory PFK domain 2 region. R481 is a binding site for beta-D-fructose 2,6-bisphosphate. K486 carries the post-translational modification N6-acetyllysine. Beta-D-fructose 2,6-bisphosphate-binding positions include 538–542 (TVSNN), R576, 583–585 (MGG), and E639. O-linked (GlcNAc) serine glycosylation is present at S540. At Y651 the chain carries Phosphotyrosine. Beta-D-fructose 2,6-bisphosphate-binding positions include R665 and 671-674 (HMQQ). N6-acetyllysine is present on K688. Position 744 (R744) interacts with beta-D-fructose 2,6-bisphosphate. A Phosphoserine modification is found at S783.

It belongs to the phosphofructokinase type A (PFKA) family. ATP-dependent PFK group I subfamily. Eukaryotic two domain clade 'E' sub-subfamily. In terms of assembly, homo- and heterotetramers. Phosphofructokinase (PFK) enzyme functions as a tetramer composed of different combinations of 3 types of subunits, called PFKM (where M stands for Muscle), PFKL (Liver) and PFKP (Platelet). The composition of the PFK tetramer differs according to the tissue type it is present in. In muscles, it is composed of 4 PFKM subunits (also called M4). In the liver, the predominant form is a tetramer of PFKL subunits (L4). In erythrocytes, both PFKM and PFKL subunits randomly tetramerize to form M4, L4 and other combinations (ML3, M2L2, M3L). In platelets, brain and fibroblasts, PFK contains a higher proportion of PFKP subunits. The kinetic and regulatory properties of the tetrameric enzyme are dependent on the subunit composition, hence can vary across tissues. Interacts with ATG4B; promoting phosphorylation of ATG4B. The cofactor is Mg(2+). In terms of processing, phosphorylation at Ser-386 promotes interaction with ATG4B. Post-translationally, glcNAcylation decreases enzyme activity.

Its subcellular location is the cytoplasm. The catalysed reaction is beta-D-fructose 6-phosphate + ATP = beta-D-fructose 1,6-bisphosphate + ADP + H(+). It functions in the pathway carbohydrate degradation; glycolysis; D-glyceraldehyde 3-phosphate and glycerone phosphate from D-glucose: step 3/4. Allosterically activated by ADP, AMP, or fructose 2,6-bisphosphate, and allosterically inhibited by ATP or citrate. In terms of biological role, catalyzes the phosphorylation of D-fructose 6-phosphate to fructose 1,6-bisphosphate by ATP, the first committing step of glycolysis. The polypeptide is ATP-dependent 6-phosphofructokinase, platelet type (PFKP) (Homo sapiens (Human)).